A 239-amino-acid chain; its full sequence is Sugar fermentation stimulation protein homolog (239 aa).

Belongs to the SfsA family.

This is Sugar fermentation stimulation protein homolog from Microcystis aeruginosa (strain NIES-843 / IAM M-2473).